Consider the following 381-residue polypeptide: Succinyl-diaminopimelate desuccinylase (381 aa).

Position 72 (His-72) interacts with Zn(2+). Asp-74 is a catalytic residue. Asp-105 lines the Zn(2+) pocket. The Proton acceptor role is filled by Glu-139. The Zn(2+) site is built by Glu-140, Glu-168, and His-354.

This sequence belongs to the peptidase M20A family. DapE subfamily. Homodimer. The cofactor is Zn(2+). Co(2+) serves as cofactor.

It catalyses the reaction N-succinyl-(2S,6S)-2,6-diaminopimelate + H2O = (2S,6S)-2,6-diaminopimelate + succinate. Its pathway is amino-acid biosynthesis; L-lysine biosynthesis via DAP pathway; LL-2,6-diaminopimelate from (S)-tetrahydrodipicolinate (succinylase route): step 3/3. Its function is as follows. Catalyzes the hydrolysis of N-succinyl-L,L-diaminopimelic acid (SDAP), forming succinate and LL-2,6-diaminopimelate (DAP), an intermediate involved in the bacterial biosynthesis of lysine and meso-diaminopimelic acid, an essential component of bacterial cell walls. This Shewanella sp. (strain ANA-3) protein is Succinyl-diaminopimelate desuccinylase.